The primary structure comprises 429 residues: Phosphoglucosamine mutase (429 aa).

The active-site Phosphoserine intermediate is the S96. Residues S96, D230, D232, and D234 each contribute to the Mg(2+) site. The residue at position 96 (S96) is a Phosphoserine.

This sequence belongs to the phosphohexose mutase family. The cofactor is Mg(2+). In terms of processing, activated by phosphorylation.

It catalyses the reaction alpha-D-glucosamine 1-phosphate = D-glucosamine 6-phosphate. Functionally, catalyzes the conversion of glucosamine-6-phosphate to glucosamine-1-phosphate. The chain is Phosphoglucosamine mutase from Thermotoga petrophila (strain ATCC BAA-488 / DSM 13995 / JCM 10881 / RKU-1).